A 119-amino-acid chain; its full sequence is Large ribosomal subunit protein bL20 (119 aa).

This sequence belongs to the bacterial ribosomal protein bL20 family.

Its function is as follows. Binds directly to 23S ribosomal RNA and is necessary for the in vitro assembly process of the 50S ribosomal subunit. It is not involved in the protein synthesizing functions of that subunit. The chain is Large ribosomal subunit protein bL20 from Polaromonas sp. (strain JS666 / ATCC BAA-500).